Here is a 524-residue protein sequence, read N- to C-terminus: Inorganic phosphate transporter 1-1 (524 aa).

Residues 1 to 24 (MAEQQLGVLKALDVAKTQLYHFTA) are Cytoplasmic-facing. Residues 25–45 (IVIAGMGFFTDAYDLFCVSLV) form a helical membrane-spanning segment. The Extracellular segment spans residues 46–70 (TKLLGRIYYFNPESAKPGSLPPHVA). Residues 71–91 (AAVNGVALCGTLSGQLFFGWL) form a helical membrane-spanning segment. The Cytoplasmic segment spans residues 92–99 (GDKLGRKK). The chain crosses the membrane as a helical span at residues 100–120 (VYGLTLVMMILCSVASGLSFG). Over 121 to 131 (HEAKGVMTTLC) the chain is Extracellular. Residues 132-152 (FFRFWLGFGIGGDYPLSATIM) traverse the membrane as a helical segment. The Cytoplasmic segment spans residues 153–161 (SEYANKKTR). A helical membrane pass occupies residues 162-182 (GAFIAAVFAMQGVGILAGGFV). The Extracellular portion of the chain corresponds to 183 to 211 (ALAVSSIFDKKFPAPTYAVNRALSTPPQV). A helical transmembrane segment spans residues 212-232 (DYIWRIIVMFGALPAALTYYW). Topologically, residues 233-292 (RMKMPETARYTALVAKNIKQATADMSKVLQTDIELEERVEDDVKDPKQNYGLFSKEFLRR) are cytoplasmic. Residues 293 to 313 (HGLHLLGTTSTWFLLDIAFYS) traverse the membrane as a helical segment. The Extracellular segment spans residues 314-348 (QNLFQKDIFSAIGWIPKAATMNATHEVFRIARAQT). A helical membrane pass occupies residues 349–369 (LIALCSTVPGYWFTVAFIDTI). At 370–371 (GR) the chain is on the cytoplasmic side. A helical transmembrane segment spans residues 372 to 392 (FKIQLNGFFMMTVFMFAIAFP). Residues 393 to 402 (YNHWIKPENR) lie on the Extracellular side of the membrane. Residues 403-423 (IGFVVMYSLTFFFANFGPNAT) form a helical membrane-spanning segment. At 424 to 441 (TFIVPAEIFPARLRSTCH) the chain is on the cytoplasmic side. A helical membrane pass occupies residues 442–462 (GISAAAGKAGAIVGAFGFLYA). The Extracellular portion of the chain corresponds to 463 to 484 (AQSQDKAKVDAGYPPGIGVKNS). Residues 485 to 505 (LIMLGVLNFIGMLFTFLVPEP) traverse the membrane as a helical segment. The Cytoplasmic portion of the chain corresponds to 506–524 (KGKSLEELSGEAEVSHDEK).

It belongs to the major facilitator superfamily. Phosphate:H(+) symporter (TC 2.A.1.9) family. As to quaternary structure, interacts with NLA. In terms of processing, ubiquitinated by NLA. Ubiquitination of PHT1-1 leads to its degradation by the proteasome. Mostly expressed in roots, especially in trichoblasts and in emerging secondary roots and root hairs, but not in root tips. Also present in hydathodes, axillary buds and peripheral endosperm of germinating seeds.

It is found in the cell membrane. Inhibited by protonophores (e.g. 2,4-dinitrophenol and carbonylcyanide m-chlorophenylhydrazone), the plasma membrane H(+)-ATPase inhibitor diethylstilbestorol, and the phosphate analog arsenate. High-affinity transporter for external inorganic phosphate. Acts as a H(+):phosphate symporter in both low- and high-Pi conditions. Confers sensitivity to arsenate. The protein is Inorganic phosphate transporter 1-1 (PHT1-1) of Arabidopsis thaliana (Mouse-ear cress).